Here is a 301-residue protein sequence, read N- to C-terminus: Protease HtpX (301 aa).

A run of 2 helical transmembrane segments spans residues 4 to 24 and 38 to 58; these read IGLFLLTNLAVLVVAGIILSL and LGNLLVICFVFGMVGSLVSLF. His-147 is a binding site for Zn(2+). Glu-148 is a catalytic residue. His-151 is a Zn(2+) binding site. The next 2 helical transmembrane spans lie at 155-175 and 200-220; these read GDMVTLALIQGVVNAFVMFFA and FIITMVLDIVFGILASAIVMW. Glu-226 contributes to the Zn(2+) binding site.

Belongs to the peptidase M48B family. The cofactor is Zn(2+).

Its subcellular location is the cell inner membrane. The chain is Protease HtpX from Acinetobacter baumannii (strain AB307-0294).